Here is a 95-residue protein sequence, read N- to C-terminus: RING finger protein Z (95 aa).

G2 carries the N-myristoyl glycine; by host lipid modification. The segment at 38–74 adopts an RING-type; atypical zinc-finger fold; sequence CKSCWFANKGLLKCSNHYLCLKCLTLMLRRSDYCGIC. Residues 88–91 carry the PTAP/PSAP motif motif; that stretch reads PSAP.

Belongs to the arenaviridae Z protein family. Interacts with protein NP; this interaction probably directs the encapsidated genome to budding sites. Interacts (via RING domain) with polymerase L; this interaction inhibits viral transcription and replication, Z partially blocks the product exit tunnel for the releasing nascent RNA product. Interacts with the glycoprotein complex; this interaction plays a role in virion budding. Interacts with host eIF4E; this interaction results in eIF4E reduced affinity for its substrate, the 5'-m7 G cap structure. Interacts (via late-budding domain) with host TSG101; this interaction is essential for budding and release of viral particles. Interacts with host RPLP0; this interaction may serve to load ribosome-like particles inside the virion. Interacts with host PML; this interaction induces PML bodies redistribution in the cytoplasm upon viral infection. Myristoylation is required for the role of RING finger protein Z in assembly and budding.

The protein resides in the virion. It localises to the host cytoplasm. The protein localises to the host perinuclear region. Its subcellular location is the host cell membrane. Its function is as follows. Plays a crucial role in virion assembly and budding. Expressed late in the virus life cycle, it acts as an inhibitor of viral transcription and RNA synthesis by interacting with the viral polymerase L. Presumably recruits the NP encapsidated genome to cellular membranes at budding sites via direct interaction with NP. Plays critical roles in the final steps of viral release by interacting with host TSG101, a member of the vacuolar protein-sorting pathway and using other cellular host proteins involved in vesicle formation pathway. The budding of the virus progeny occurs after association of protein Z with the viral glycoprotein complex SSP-GP1-GP2 at the cell periphery, step that requires myristoylation of protein Z. Also selectively represses protein production by associating with host eIF4E. In cell-based minigenome assay, has an inhibitory effect on the ribonucleoprotein machinery (vRNP), which is responsible for the replication and transcription of the viral genome. The chain is RING finger protein Z from Neotoma (wood rats).